A 442-amino-acid chain; its full sequence is MLILKNVTAVQLHPAKVQEGVDIAIENDVIVAIGDALTQRYPDASFKEMHGRIVMPGIVCSHNHFYSGLSRGIMANIAPCPDFISTLKNLWWRLDRALDEESLYYSGLICSLEAIKSGCTSVIDHHASPAYIGGSLSTLRDAFLKVGLRAMTCFETTDRNNGIKELQEGVEENIRFARLIDEAKKATSEPYLVEAHIGAHAPFTVPDAGLEMLREAVKATGRGLHIHAAEDLYDVSYSHHWYGKDLLARLAQFDLIDSKTLVAHGLYLSKDDITLLNQRDAFLVHNARSNMNNHVGYNHHLSDIRNLALGTDGIGSDMFEEMKFAFFKHRDAGGPLWPDSFAKALTNGNELMSRNFGAKFGLLEAGYKADLTICDYNSPTPLLADNIAGHIAFGMGSGSVHSVMVNGVMVYEDRQFNFDCDSIYAQARKAAASMWRRMDALA.

The Zn(2+) site is built by His-62, His-64, His-227, and Asp-312.

This sequence belongs to the metallo-dependent hydrolases superfamily. ATZ/TRZ family.

The sequence is that of Putative aminohydrolase SsnA (ssnA) from Escherichia coli (strain K12).